A 229-amino-acid chain; its full sequence is Potassium/proton antiporter CemA (229 aa).

4 helical membrane-spanning segments follow: residues 6–26, 107–127, 152–172, and 190–210; these read AFIP…ISLC, IFNF…SFWG, FLIL…GWEL, and LSGL…YWIF.

The protein belongs to the CemA family.

Its subcellular location is the plastid. It localises to the chloroplast inner membrane. The catalysed reaction is K(+)(in) + H(+)(out) = K(+)(out) + H(+)(in). Contributes to K(+)/H(+) antiport activity by supporting proton efflux to control proton extrusion and homeostasis in chloroplasts in a light-dependent manner to modulate photosynthesis. Prevents excessive induction of non-photochemical quenching (NPQ) under continuous-light conditions. Indirectly promotes efficient inorganic carbon uptake into chloroplasts. This is Potassium/proton antiporter CemA from Aethionema cordifolium (Lebanon stonecress).